The sequence spans 266 residues: Diphthine synthase (266 aa).

Residues L9, D84, V87, 112 to 113, L169, A210, and H235 each bind S-adenosyl-L-methionine; that span reads SI.

The protein belongs to the diphthine synthase family. Homodimer.

The enzyme catalyses 2-[(3S)-amino-3-carboxypropyl]-L-histidyl-[translation elongation factor 2] + 3 S-adenosyl-L-methionine = diphthine-[translation elongation factor 2] + 3 S-adenosyl-L-homocysteine + 3 H(+). The protein operates within protein modification; peptidyl-diphthamide biosynthesis. Its function is as follows. S-adenosyl-L-methionine-dependent methyltransferase that catalyzes the trimethylation of the amino group of the modified target histidine residue in translation elongation factor 2 (EF-2), to form an intermediate called diphthine. The three successive methylation reactions represent the second step of diphthamide biosynthesis. In Methanosarcina acetivorans (strain ATCC 35395 / DSM 2834 / JCM 12185 / C2A), this protein is Diphthine synthase.